The primary structure comprises 507 residues: Maturase K (507 aa).

The protein belongs to the intron maturase 2 family. MatK subfamily.

Its subcellular location is the plastid. The protein localises to the chloroplast. Its function is as follows. Usually encoded in the trnK tRNA gene intron. Probably assists in splicing its own and other chloroplast group II introns. In Lyonia ferruginea (Rusty staggerbush), this protein is Maturase K.